The following is a 458-amino-acid chain: 5-hydroxytryptamine receptor 2C (458 aa).

The signal sequence occupies residues 1 to 32; sequence MVNLRNAVHSFLVHLIGLLVWQCDISVSPVAA. Over 33–55 the chain is Extracellular; sequence IVTDIFNTSDGGRFKFPDGVQNW. The helical transmembrane segment at 56 to 80 threads the bilayer; it reads PALSIVVIIIMTIGGNILVIMAVSM. Topologically, residues 81–86 are cytoplasmic; it reads EKKLHN. Residues 87-111 traverse the membrane as a helical segment; the sequence is ATNYFLMSLAIADMLVGLLVMPLSL. At 112–128 the chain is on the extracellular side; it reads LAILYDYVWPLPRYLCP. A disulfide bond links cysteine 127 and cysteine 207. Residues 129–151 form a helical membrane-spanning segment; sequence VWISLDVLFSTASIMHLCAISLD. An ergotamine-binding site is contributed by threonine 139. Residues 151–153 carry the DRY motif; important for ligand-induced conformation changes motif; that stretch reads DRY. Residues 152–167 are Cytoplasmic-facing; sequence RYVAIRNPIEHSRFNS. The helical transmembrane segment at 168–189 threads the bilayer; the sequence is RTKAIMKIAIVWAISIGVSVPI. Residues 190 to 213 lie on the Extracellular side of the membrane; it reads PVIGLRDERKVFVNNTTCVLNDPN. Leucine 209 is an ergotamine binding site. Residues 214-236 traverse the membrane as a helical segment; the sequence is FVLIGSFVAFFIPLTIMVITYCL. Residues 237–311 lie on the Cytoplasmic side of the membrane; sequence TIYVLRRQAL…AINNERKASK (75 aa). Residues 274–301 form a disordered region; the sequence is EENSANPNQDQNARRRKKKERRPRGTMQ. Basic residues predominate over residues 287–297; the sequence is RRRKKKERRPR. A helical transmembrane segment spans residues 312 to 336; that stretch reads VLGIVFFVFLIMWCPFFITNILSVL. A disulfide bridge links cysteine 337 with cysteine 341. Over 337 to 347 the chain is Extracellular; the sequence is CEKSCNQKLME. The chain crosses the membrane as a helical span at residues 348-370; that stretch reads KLLNVFVWIGYVCSGINPLVYTL. Positions 364–368 match the NPxxY motif; important for ligand-induced conformation changes and signaling motif; the sequence is NPLVY. Residues 371-458 lie on the Cytoplasmic side of the membrane; the sequence is FNKIYRRAFS…SVVSERISSV (88 aa). The PDZ-binding signature appears at 456–458; the sequence is SSV.

The protein belongs to the G-protein coupled receptor 1 family. In terms of assembly, interacts with MPDZ. Interacts with ARRB2. Interacts with MPP3; this interaction stabilizes the receptor at the plasma membrane and prevents the desensitization of the HTR2C receptor-mediated calcium response.

It localises to the cell membrane. Its function is as follows. G-protein coupled receptor for 5-hydroxytryptamine (serotonin). Also functions as a receptor for various drugs and psychoactive substances, including ergot alkaloid derivatives, 1-2,5,-dimethoxy-4-iodophenyl-2-aminopropane (DOI) and lysergic acid diethylamide (LSD). Ligand binding causes a conformation change that triggers signaling via guanine nucleotide-binding proteins (G proteins) and modulates the activity of downstream effectors. HTR2C is coupled to G(q)/G(11) G alpha proteins and activates phospholipase C-beta, releasing diacylglycerol (DAG) and inositol 1,4,5-trisphosphate (IP3) second messengers that modulate the activity of phosphatidylinositol 3-kinase and promote the release of Ca(2+) ions from intracellular stores, respectively. Beta-arrestin family members inhibit signaling via G proteins and mediate activation of alternative signaling pathways. Regulates neuronal activity via the activation of short transient receptor potential calcium channels in the brain, and thereby modulates the activation of pro-opiomelanocortin neurons and the release of CRH that then regulates the release of corticosterone. Plays a role in the regulation of appetite and eating behavior, responses to anxiogenic stimuli and stress. Plays a role in insulin sensitivity and glucose homeostasis. The protein is 5-hydroxytryptamine receptor 2C of Pan troglodytes (Chimpanzee).